Here is a 204-residue protein sequence, read N- to C-terminus: Holliday junction resolvase RecU (204 aa).

The interval 1-24 is disordered; the sequence is MTIHYPNGQQPVQHYNTHNELPTP. Polar residues predominate over residues 7–24; sequence NGQQPVQHYNTHNELPTP. Positions 87, 89, 102, and 121 each coordinate Mg(2+).

It belongs to the RecU family. Requires Mg(2+) as cofactor.

It is found in the cytoplasm. The catalysed reaction is Endonucleolytic cleavage at a junction such as a reciprocal single-stranded crossover between two homologous DNA duplexes (Holliday junction).. Its function is as follows. Endonuclease that resolves Holliday junction intermediates in genetic recombination. Cleaves mobile four-strand junctions by introducing symmetrical nicks in paired strands. Promotes annealing of linear ssDNA with homologous dsDNA. Required for DNA repair, homologous recombination and chromosome segregation. The chain is Holliday junction resolvase RecU from Limosilactobacillus reuteri (strain DSM 20016) (Lactobacillus reuteri).